An 86-amino-acid polypeptide reads, in one-letter code: Small ribosomal subunit protein bS20 (86 aa).

A disordered region spans residues 1–22; that stretch reads MANIKSQIKRIRTNERRRLRNQ. Basic residues predominate over residues 7–20; it reads QIKRIRTNERRRLR.

It belongs to the bacterial ribosomal protein bS20 family.

Binds directly to 16S ribosomal RNA. The polypeptide is Small ribosomal subunit protein bS20 (Mycolicibacterium smegmatis (strain ATCC 700084 / mc(2)155) (Mycobacterium smegmatis)).